A 1830-amino-acid chain; its full sequence is Guanine nucleotide exchange factor SPIKE 1 (1830 aa).

An N-acetylmethionine modification is found at methionine 1. Residues 285–304 (NTGESASPSSPLAPSMTASS) form a disordered region. Low complexity predominate over residues 289–304 (SASPSSPLAPSMTASS). Residues 463–622 (FHCLYVYPVA…NIFKLRLRLC (160 aa)) form the C2 DOCK-type domain. Serine 1051 carries the phosphoserine modification. Phosphothreonine is present on threonine 1079. Position 1095 is a phosphoserine (serine 1095). Residues 1379-1828 (MAFAPVPDLH…LSHYIPAILS (450 aa)) enclose the DOCKER domain.

Belongs to the DOCK family. As to quaternary structure, homodimer. Component of SCAR/WAVE and ARP2/3 complexes. Interacts directly with ARAC4/ROP2, ARAC1/ROP3, ARAC5/ROP4, ARAC6/ROP5, ARAC8/ROP10, ARAC9/ROP8, SCAR1, SCAR2, SCAR3, SCAR4, ABI1, ABI2, ABI3 and ABI4. Binds to the inactive GDP-bound form of ARAC3/ROP6. Expressed ubiquitously, in roots and aerial organs.

Its subcellular location is the cytoplasm. The protein resides in the endoplasmic reticulum membrane. The protein localises to the nucleus. In terms of biological role, guanine nucleotide exchange factor (GEF) for Rho and Rac. GEF proteins activate small GTPases by exchanging bound GDP for free GTP. Controls actin polymerization via the two heteromeric complexes WAVE and actin-related protein (ARP) 2/3. Involved in cytoskeletal reorganization required for cell shape (e.g. trichome and cotyledon) control and tissue development. Prevents cortical microtubules organization into parallel arrays oriented perpendicular to the axis of cell elongation to limit anisotropic cell growth during petal development, probably by triggering ARAC4/ROP2 and ARAC3/ROP6 activity. Promotes polarized growth and cell-cell adhesion in the leaf epidermis probably by promoting the formation of endoplasmic reticulum (ER) exit site (ERES) and/or trafficking between the ER and Golgi. Triggers ARAC3/ROP6 activation required for auxin-mediated inhibition of PIN2 internalization during gravitropic responses (, PubMed:22683260). The sequence is that of Guanine nucleotide exchange factor SPIKE 1 from Arabidopsis thaliana (Mouse-ear cress).